The following is a 307-amino-acid chain: Glycine--tRNA ligase alpha subunit (307 aa).

It belongs to the class-II aminoacyl-tRNA synthetase family. Tetramer of two alpha and two beta subunits.

The protein localises to the cytoplasm. The enzyme catalyses tRNA(Gly) + glycine + ATP = glycyl-tRNA(Gly) + AMP + diphosphate. This chain is Glycine--tRNA ligase alpha subunit, found in Aeromonas hydrophila subsp. hydrophila (strain ATCC 7966 / DSM 30187 / BCRC 13018 / CCUG 14551 / JCM 1027 / KCTC 2358 / NCIMB 9240 / NCTC 8049).